Here is a 117-residue protein sequence, read N- to C-terminus: Large ribosomal subunit protein uL18 (117 aa).

The protein belongs to the universal ribosomal protein uL18 family. Part of the 50S ribosomal subunit; part of the 5S rRNA/L5/L18/L25 subcomplex. Contacts the 5S and 23S rRNAs.

Functionally, this is one of the proteins that bind and probably mediate the attachment of the 5S RNA into the large ribosomal subunit, where it forms part of the central protuberance. This chain is Large ribosomal subunit protein uL18, found in Edwardsiella ictaluri (strain 93-146).